A 539-amino-acid chain; its full sequence is MHSKILILDFGSQVTQLIARRVRDSGVFSEVFPYDVSDEFVRNYGAAGVILSGGPNSVIEGDESPRVPQAVFELGVPVMGICYGMQAMAEQLGGKVENGKVREFGYAEVRAHGHTALLKDISDFTTPEGHGMLKVWMSHGDKVNEMPPGFKLMASTPNCPIAGMADEERRMYAFQFHPEVTHTVQGKAIIARFVHDICGCKSDWNMPDYIAEAVEKIRQQVGSDEVILGLSGGVDSSVAAALIHRAIGDQLTCVFVDHGLLRLDEGKMVMEMFAESLGVNVIHIDAVDQFMGHLAGVSDPEAKRKIIGREFVEVFQVEAGKRKNAKWLAQGTIYPDVIESAGKGKKGHTIKSHHNVGGLPETLNLQLLEPLRELFKDEVRKLGVALGLPHDMVYRHPFPGPGLGVRILGEVKKEFADLLRRADAIFIEELRKTPFVATPGASEATDNGIPHRNWYDATSQAFAVFLPVKSVGVMGDGRTYEYVVALRAVQTQDFMTAHWAHLPHELLGNVSNRIINEVRGINRVVYDISGKPPATIEWE.

Positions 4–203 (KILILDFGSQ…VHDICGCKSD (200 aa)) constitute a Glutamine amidotransferase type-1 domain. Cys82 acts as the Nucleophile in catalysis. Residues His177 and Glu179 contribute to the active site. In terms of domain architecture, GMPS ATP-PPase spans 204-395 (WNMPDYIAEA…LGLPHDMVYR (192 aa)). Residue 231–237 (SGGVDSS) coordinates ATP.

Homodimer.

The catalysed reaction is XMP + L-glutamine + ATP + H2O = GMP + L-glutamate + AMP + diphosphate + 2 H(+). It participates in purine metabolism; GMP biosynthesis; GMP from XMP (L-Gln route): step 1/1. Catalyzes the synthesis of GMP from XMP. This Janthinobacterium sp. (strain Marseille) (Minibacterium massiliensis) protein is GMP synthase [glutamine-hydrolyzing].